The primary structure comprises 727 residues: Procollagen-lysine,2-oxoglutarate 5-dioxygenase 1 (727 aa).

The signal sequence occupies residues 1–18; sequence MRPLLLLALLGWLLLAEA. N-linked (GlcNAc...) asparagine glycans are attached at residues Asn163, Asn197, and Asn538. In terms of domain architecture, Fe2OG dioxygenase spans 636-727; the sequence is QFDLAFVVRY…RYIAVSFVDP (92 aa). His656 and Asp658 together coordinate Fe cation. A glycan (N-linked (GlcNAc...) asparagine) is linked at Asn686. His708 provides a ligand contact to Fe cation. Residue Arg718 is part of the active site.

Homodimer. Identified in a complex with P3H3 and P3H4. The cofactor is Fe(2+). L-ascorbate is required as a cofactor.

It is found in the rough endoplasmic reticulum membrane. The catalysed reaction is L-lysyl-[collagen] + 2-oxoglutarate + O2 = (5R)-5-hydroxy-L-lysyl-[collagen] + succinate + CO2. Functionally, part of a complex composed of PLOD1, P3H3 and P3H4 that catalyzes hydroxylation of lysine residues in collagen alpha chains and is required for normal assembly and cross-linkling of collagen fibrils. Forms hydroxylysine residues in -Xaa-Lys-Gly- sequences in collagens. These hydroxylysines serve as sites of attachment for carbohydrate units and are essential for the stability of the intermolecular collagen cross-links. The chain is Procollagen-lysine,2-oxoglutarate 5-dioxygenase 1 (PLOD1) from Homo sapiens (Human).